Reading from the N-terminus, the 37-residue chain is Photosystem II reaction center protein T (37 aa).

The chain crosses the membrane as a helical span at residues 3 to 23 (ALVYTFLLVSTLGILFFAIFF).

Belongs to the PsbT family. In terms of assembly, PSII is composed of 1 copy each of membrane proteins PsbA, PsbB, PsbC, PsbD, PsbE, PsbF, PsbH, PsbI, PsbJ, PsbK, PsbL, PsbM, PsbT, PsbY, PsbZ, Psb30/Ycf12, at least 3 peripheral proteins of the oxygen-evolving complex and a large number of cofactors. It forms dimeric complexes.

It is found in the plastid. The protein resides in the chloroplast thylakoid membrane. Functionally, found at the monomer-monomer interface of the photosystem II (PS II) dimer, plays a role in assembly and dimerization of PSII. PSII is a light-driven water plastoquinone oxidoreductase, using light energy to abstract electrons from H(2)O, generating a proton gradient subsequently used for ATP formation. This Ephedra sinica (Chinese ephedra) protein is Photosystem II reaction center protein T.